Reading from the N-terminus, the 513-residue chain is Alpha,alpha-trehalose-phosphate synthase [UDP-forming] (513 aa).

A Phosphotyrosine modification is found at tyrosine 40. D-glucose 6-phosphate-binding residues include tyrosine 104 and aspartate 158. UDP contacts are provided by arginine 294 and lysine 299. UDP-alpha-D-glucose is bound by residues arginine 294 and lysine 299. Arginine 332 contributes to the D-glucose 6-phosphate binding site. UDP-alpha-D-glucose is bound at residue 393–401 (DGMNLVSYE). UDP is bound at residue 397–401 (LVSYE). Phosphoserine is present on serine 503.

This sequence belongs to the glycosyltransferase 20 family. In terms of assembly, homomer. Component of the trehalose synthase complex that contains at least tps1, ntp1 and tpp1. Interacts with tpp1. Interacts with ntp1; the interaction is independent of stress conditions.

The protein resides in the cytoplasm. Its subcellular location is the nucleus. It carries out the reaction D-glucose 6-phosphate + UDP-alpha-D-glucose = alpha,alpha-trehalose 6-phosphate + UDP + H(+). Its pathway is carbohydrate biosynthesis. In terms of biological role, synthase catalytic subunit of the trehalose synthase complex that catalyzes the production of trehalose from glucose-6-phosphate and UDP-alpha-D-glucose in a two step process. The disaccharide trehalose serves as a storage carbohydrate that is mobilized during nutrient stress and spore germination. Together with ntp1, regulates the level of trehalose as a protectant for cell integrity during thermal and osmotic stress. The chain is Alpha,alpha-trehalose-phosphate synthase [UDP-forming] from Schizosaccharomyces pombe (strain 972 / ATCC 24843) (Fission yeast).